A 78-amino-acid polypeptide reads, in one-letter code: Large ribosomal subunit protein bL28 (78 aa).

Belongs to the bacterial ribosomal protein bL28 family.

The chain is Large ribosomal subunit protein bL28 (rpmB) from Xylella fastidiosa (strain 9a5c).